A 469-amino-acid polypeptide reads, in one-letter code: UDP-N-acetylmuramate--L-alanine ligase (469 aa).

118–124 (GTHGKTT) contacts ATP.

This sequence belongs to the MurCDEF family.

It localises to the cytoplasm. It catalyses the reaction UDP-N-acetyl-alpha-D-muramate + L-alanine + ATP = UDP-N-acetyl-alpha-D-muramoyl-L-alanine + ADP + phosphate + H(+). It functions in the pathway cell wall biogenesis; peptidoglycan biosynthesis. Cell wall formation. This is UDP-N-acetylmuramate--L-alanine ligase from Ruegeria sp. (strain TM1040) (Silicibacter sp.).